The sequence spans 278 residues: Delta(3,5)-Delta(2,4)-dienoyl-CoA isomerase, peroxisomal (278 aa).

An N-acetylmethionine modification is found at Met-1. Residues 69-73 (SGIDL) and Gly-128 contribute to the substrate site. The Microbody targeting signal signature appears at 276-278 (AKL).

This sequence belongs to the enoyl-CoA hydratase/isomerase family. As to expression, expressed in roots, leaves, stems and flowers.

It is found in the peroxisome. The enzyme catalyses a (3E,5Z)-dienoyl-CoA = a (2E,4E)-(5,6-saturated)-dienoyl-CoA. It participates in lipid metabolism; fatty acid beta-oxidation. Functionally, converts 3,5-dienoyl-CoAs to the corresponding 2,4-dienoyl-CoAs. Involved in degradation of unsaturated fatty acids. In Arabidopsis thaliana (Mouse-ear cress), this protein is Delta(3,5)-Delta(2,4)-dienoyl-CoA isomerase, peroxisomal.